The primary structure comprises 269 residues: Tryptophan synthase alpha chain (269 aa).

Catalysis depends on proton acceptor residues glutamate 49 and aspartate 60.

Belongs to the TrpA family. As to quaternary structure, tetramer of two alpha and two beta chains.

The enzyme catalyses (1S,2R)-1-C-(indol-3-yl)glycerol 3-phosphate + L-serine = D-glyceraldehyde 3-phosphate + L-tryptophan + H2O. It functions in the pathway amino-acid biosynthesis; L-tryptophan biosynthesis; L-tryptophan from chorismate: step 5/5. Functionally, the alpha subunit is responsible for the aldol cleavage of indoleglycerol phosphate to indole and glyceraldehyde 3-phosphate. In Pseudomonas putida (strain ATCC 700007 / DSM 6899 / JCM 31910 / BCRC 17059 / LMG 24140 / F1), this protein is Tryptophan synthase alpha chain.